The chain runs to 561 residues: Hemolysin transporter protein HpmB (561 aa).

A signal peptide spans 1 to 17; it reads MKKKVVLLTLLSCFSTS. The region spanning 77 to 150 is the POTRA domain; sequence LPIKGVYIQG…GELGLYAIEG (74 aa).

The protein belongs to the TPS (TC 1.B.20) family.

It is found in the cell outer membrane. Interacts with the cell-bound hemolysin. Necessary for the extracellular secretion and activation of the hemolysin. In terms of biological role, probable member of a two partner secretion pathway (TPS) in which it mediates the secretion of hemolysin. The polypeptide is Hemolysin transporter protein HpmB (hpmB) (Proteus mirabilis).